Reading from the N-terminus, the 235-residue chain is Large ribosomal subunit protein uL1 (235 aa).

Belongs to the universal ribosomal protein uL1 family. Part of the 50S ribosomal subunit.

Binds directly to 23S rRNA. The L1 stalk is quite mobile in the ribosome, and is involved in E site tRNA release. Its function is as follows. Protein L1 is also a translational repressor protein, it controls the translation of the L11 operon by binding to its mRNA. The sequence is that of Large ribosomal subunit protein uL1 from Solidesulfovibrio magneticus (strain ATCC 700980 / DSM 13731 / RS-1) (Desulfovibrio magneticus).